Here is a 317-residue protein sequence, read N- to C-terminus: NADH-ubiquinone oxidoreductase chain 1 (317 aa).

9 consecutive transmembrane segments (helical) span residues 3–23 (YIEL…LTVA), 37–57 (PNAV…KLLL), 69–89 (LILF…WSVI), 103–123 (GFIL…LAGW), 141–161 (LISY…IGGT), 173–193 (AIWY…GCVA), 207–227 (SELV…LFFL), 247–267 (GGTG…YIWV), and 282–302 (LCWM…PAYL).

Belongs to the complex I subunit 1 family.

It is found in the mitochondrion inner membrane. The catalysed reaction is a ubiquinone + NADH + 5 H(+)(in) = a ubiquinol + NAD(+) + 4 H(+)(out). Its function is as follows. Core subunit of the mitochondrial membrane respiratory chain NADH dehydrogenase (Complex I) that is believed to belong to the minimal assembly required for catalysis. Complex I functions in the transfer of electrons from NADH to the respiratory chain. The immediate electron acceptor for the enzyme is believed to be ubiquinone. The sequence is that of NADH-ubiquinone oxidoreductase chain 1 (NAD1) from Candida albicans (strain SC5314 / ATCC MYA-2876) (Yeast).